Reading from the N-terminus, the 314-residue chain is ATP synthase gamma chain (314 aa).

Belongs to the ATPase gamma chain family. In terms of assembly, F-type ATPases have 2 components, CF(1) - the catalytic core - and CF(0) - the membrane proton channel. CF(1) has five subunits: alpha(3), beta(3), gamma(1), delta(1), epsilon(1). CF(0) has three main subunits: a, b and c.

The protein resides in the cellular thylakoid membrane. In terms of biological role, produces ATP from ADP in the presence of a proton gradient across the membrane. The gamma chain is believed to be important in regulating ATPase activity and the flow of protons through the CF(0) complex. This Synechococcus sp. (strain JA-2-3B'a(2-13)) (Cyanobacteria bacterium Yellowstone B-Prime) protein is ATP synthase gamma chain.